The sequence spans 116 residues: Large ribosomal subunit protein bL19 (116 aa).

Belongs to the bacterial ribosomal protein bL19 family.

Its function is as follows. This protein is located at the 30S-50S ribosomal subunit interface and may play a role in the structure and function of the aminoacyl-tRNA binding site. In Actinobacillus succinogenes (strain ATCC 55618 / DSM 22257 / CCUG 43843 / 130Z), this protein is Large ribosomal subunit protein bL19.